The following is a 135-amino-acid chain: DNA-directed RNA polymerase subunit omega (135 aa).

The protein belongs to the RNA polymerase subunit omega family. The RNAP catalytic core consists of 2 alpha, 1 beta, 1 beta' and 1 omega subunit. When a sigma factor is associated with the core the holoenzyme is formed, which can initiate transcription.

It catalyses the reaction RNA(n) + a ribonucleoside 5'-triphosphate = RNA(n+1) + diphosphate. In terms of biological role, promotes RNA polymerase assembly. Latches the N- and C-terminal regions of the beta' subunit thereby facilitating its interaction with the beta and alpha subunits. This chain is DNA-directed RNA polymerase subunit omega, found in Sinorhizobium medicae (strain WSM419) (Ensifer medicae).